A 393-amino-acid polypeptide reads, in one-letter code: Actin-related protein 2 (393 aa).

ATP contacts are provided by residues 158–160 (GDG), 212–216 (RQMKE), and 303–308 (GGTTMY).

It belongs to the actin family. ARP2 subfamily. As to quaternary structure, component of the Arp2/3 complex.

The protein localises to the cytoplasm. The protein resides in the cytoskeleton. Its function is as follows. Functions as ATP-binding component of the Arp2/3 complex which is involved in regulation of actin polymerization and together with an activating nucleation-promoting factor (NPF) mediates the formation of branched actin networks. Seems to contact the pointed end of the daughter actin filament. This is Actin-related protein 2 (arx-2) from Caenorhabditis briggsae.